Reading from the N-terminus, the 497-residue chain is Hexokinase-1 (497 aa).

The chain crosses the membrane as a helical span at residues 4-24; it reads ATVGAAVIGAATVCAVAALIV. The 453-residue stretch at 35-487 folds into the Hexokinase domain; it reads ARAMAILREF…SGIGAALLAA (453 aa). The segment at 90–228 is hexokinase small subdomain; that stretch reads TGDEAGVFYA…GVDMRVSALV (139 aa). ADP is bound by residues Gly-104, Thr-105, and Asn-106. Positions 194, 195, 229, and 230 each coordinate D-glucose. The segment at 229 to 476 is hexokinase large subdomain; it reads NDTVGTLAGG…TSIVFEHSND (248 aa). ADP is bound at residue Thr-253. D-glucose-binding residues include Asn-256, Glu-284, and Glu-315. Residue Gly-441 participates in ADP binding.

This sequence belongs to the hexokinase family.

It is found in the plastid. The protein localises to the chloroplast outer membrane. It carries out the reaction a D-hexose + ATP = a D-hexose 6-phosphate + ADP + H(+). The enzyme catalyses D-fructose + ATP = D-fructose 6-phosphate + ADP + H(+). The catalysed reaction is D-glucose + ATP = D-glucose 6-phosphate + ADP + H(+). It functions in the pathway carbohydrate metabolism; hexose metabolism. Its pathway is carbohydrate degradation; glycolysis; D-glyceraldehyde 3-phosphate and glycerone phosphate from D-glucose: step 1/4. In terms of biological role, fructose and glucose phosphorylating enzyme. The sequence is that of Hexokinase-1 (HXK1) from Nicotiana tabacum (Common tobacco).